The following is a 365-amino-acid chain: Chorismate synthase (365 aa).

NADP(+) contacts are provided by R48 and R54. FMN is bound by residues 131 to 133 (RSS), 243 to 244 (NA), G288, 303 to 307 (KPTSS), and R329.

Belongs to the chorismate synthase family. As to quaternary structure, homotetramer. FMNH2 is required as a cofactor.

It catalyses the reaction 5-O-(1-carboxyvinyl)-3-phosphoshikimate = chorismate + phosphate. It functions in the pathway metabolic intermediate biosynthesis; chorismate biosynthesis; chorismate from D-erythrose 4-phosphate and phosphoenolpyruvate: step 7/7. Its function is as follows. Catalyzes the anti-1,4-elimination of the C-3 phosphate and the C-6 proR hydrogen from 5-enolpyruvylshikimate-3-phosphate (EPSP) to yield chorismate, which is the branch point compound that serves as the starting substrate for the three terminal pathways of aromatic amino acid biosynthesis. This reaction introduces a second double bond into the aromatic ring system. The polypeptide is Chorismate synthase (Rhizobium etli (strain ATCC 51251 / DSM 11541 / JCM 21823 / NBRC 15573 / CFN 42)).